The primary structure comprises 494 residues: Glutamyl-tRNA(Gln) amidotransferase subunit A (494 aa).

Residues lysine 80 and serine 155 each act as charge relay system in the active site. The Acyl-ester intermediate role is filled by serine 179.

It belongs to the amidase family. GatA subfamily. As to quaternary structure, heterotrimer of A, B and C subunits.

It catalyses the reaction L-glutamyl-tRNA(Gln) + L-glutamine + ATP + H2O = L-glutaminyl-tRNA(Gln) + L-glutamate + ADP + phosphate + H(+). In terms of biological role, allows the formation of correctly charged Gln-tRNA(Gln) through the transamidation of misacylated Glu-tRNA(Gln) in organisms which lack glutaminyl-tRNA synthetase. The reaction takes place in the presence of glutamine and ATP through an activated gamma-phospho-Glu-tRNA(Gln). The sequence is that of Glutamyl-tRNA(Gln) amidotransferase subunit A from Lachnoclostridium phytofermentans (strain ATCC 700394 / DSM 18823 / ISDg) (Clostridium phytofermentans).